Here is a 359-residue protein sequence, read N- to C-terminus: Photosystem II protein D1 1 (359 aa).

The next 3 membrane-spanning stretches (helical) occupy residues 29-46 (YVGW…AATT), 118-133 (HFLI…EWEL), and 142-156 (WICV…AASA). Residue H118 coordinates chlorophyll a. Y126 lines the pheophytin a pocket. The [CaMn4O5] cluster site is built by D170 and E189. A helical membrane pass occupies residues 197 to 218 (FHMMGVAGVFGGSLFSAMHGSL). H198 lines the chlorophyll a pocket. A quinone contacts are provided by residues H215 and 264–265 (SF). Residue H215 coordinates Fe cation. H272 contributes to the Fe cation binding site. The chain crosses the membrane as a helical span at residues 274–288 (FLAAWPVVGIWFTAL). [CaMn4O5] cluster contacts are provided by H332, E333, D342, and A344. Positions 345–359 (AAESTPVALQAPAIG) are excised as a propeptide.

Belongs to the reaction center PufL/M/PsbA/D family. PSII is composed of 1 copy each of membrane proteins PsbA, PsbB, PsbC, PsbD, PsbE, PsbF, PsbH, PsbI, PsbJ, PsbK, PsbL, PsbM, PsbT, PsbX, PsbY, PsbZ, Psb30/Ycf12, peripheral proteins PsbO, CyanoQ (PsbQ), PsbU, PsbV and a large number of cofactors. It forms dimeric complexes. The D1/D2 heterodimer binds P680, chlorophylls that are the primary electron donor of PSII, and subsequent electron acceptors. It shares a non-heme iron and each subunit binds pheophytin, quinone, additional chlorophylls, carotenoids and lipids. D1 provides most of the ligands for the Mn4-Ca-O5 cluster of the oxygen-evolving complex (OEC). There is also a Cl(-1) ion associated with D1 and D2, which is required for oxygen evolution. The PSII complex binds additional chlorophylls, carotenoids and specific lipids. is required as a cofactor. Tyr-161 forms a radical intermediate that is referred to as redox-active TyrZ, YZ or Y-Z. Post-translationally, C-terminally processed by CtpA; processing is essential to allow assembly of the oxygen-evolving complex and thus photosynthetic growth.

It is found in the cellular thylakoid membrane. The enzyme catalyses 2 a plastoquinone + 4 hnu + 2 H2O = 2 a plastoquinol + O2. Its function is as follows. Photosystem II (PSII) is a light-driven water:plastoquinone oxidoreductase that uses light energy to abstract electrons from H(2)O, generating O(2) and a proton gradient subsequently used for ATP formation. It consists of a core antenna complex that captures photons, and an electron transfer chain that converts photonic excitation into a charge separation. The D1/D2 (PsbA/PsbD) reaction center heterodimer binds P680, the primary electron donor of PSII as well as several subsequent electron acceptors. In Synechococcus sp. (strain WH7803), this protein is Photosystem II protein D1 1.